Consider the following 263-residue polypeptide: Endonuclease 8 (263 aa).

Pro-2 acts as the Schiff-base intermediate with DNA in catalysis. Residue Glu-3 is the Proton donor of the active site. Residue Lys-53 is the Proton donor; for beta-elimination activity of the active site. DNA-binding residues include Gln-70, Arg-125, and Asn-169. The FPG-type zinc finger occupies 229 to 263; it reads KVFHRDGEACERCGGIIEKTTLSSRPFYWCPHCQK. Arg-253 acts as the Proton donor; for delta-elimination activity in catalysis.

This sequence belongs to the FPG family. Zn(2+) is required as a cofactor.

The catalysed reaction is 2'-deoxyribonucleotide-(2'-deoxyribose 5'-phosphate)-2'-deoxyribonucleotide-DNA = a 3'-end 2'-deoxyribonucleotide-(2,3-dehydro-2,3-deoxyribose 5'-phosphate)-DNA + a 5'-end 5'-phospho-2'-deoxyribonucleoside-DNA + H(+). Its function is as follows. Involved in base excision repair of DNA damaged by oxidation or by mutagenic agents. Acts as a DNA glycosylase that recognizes and removes damaged bases. Has a preference for oxidized pyrimidines, such as thymine glycol, 5,6-dihydrouracil and 5,6-dihydrothymine. Has AP (apurinic/apyrimidinic) lyase activity and introduces nicks in the DNA strand. Cleaves the DNA backbone by beta-delta elimination to generate a single-strand break at the site of the removed base with both 3'- and 5'-phosphates. The chain is Endonuclease 8 from Salmonella agona (strain SL483).